Here is a 67-residue protein sequence, read N- to C-terminus: UPF0337 protein BCE_3655 (67 aa).

This sequence belongs to the UPF0337 (CsbD) family.

This Bacillus cereus (strain ATCC 10987 / NRS 248) protein is UPF0337 protein BCE_3655.